Consider the following 162-residue polypeptide: Blue copper protein 1b (162 aa).

Positions methionine 1 to alanine 23 are cleaved as a signal peptide. Positions threonine 25–alanine 125 constitute a Phytocyanin domain. Cu cation is bound at residue histidine 65. Residue asparagine 71 is glycosylated (N-linked (GlcNAc...) asparagine). A disulfide bridge links cysteine 78 with cysteine 112. Residues cysteine 106, histidine 111, and methionine 117 each contribute to the Cu cation site. A helical membrane pass occupies residues valine 142–alanine 162.

The protein resides in the membrane. The protein is Blue copper protein 1b of Medicago truncatula (Barrel medic).